Consider the following 594-residue polypeptide: Class I diterpene synthase TPS6, chloroplastic (594 aa).

Mg(2+)-binding residues include Asp-330, Asp-334, Asn-474, Gln-477, and Glu-482. The DDXXD motif motif lies at 330 to 334 (DDFFD).

The protein belongs to the terpene synthase family. Mg(2+) is required as a cofactor. In terms of tissue distribution, mostly expressed in trichomes of leaves and fruits.

The protein resides in the plastid. It localises to the chloroplast. The catalysed reaction is peregrinol diphosphate = labd-13(16),14-diene-9-ol + diphosphate. It carries out the reaction 9alpha-copalyl diphosphate = syn-isopimara-7,15-diene + diphosphate. Its pathway is secondary metabolite biosynthesis; terpenoid biosynthesis. Functionally, involved in the biosynthesis of labdane-type diterpenoid including cleroda-dienols, and peregrinol lactones and furan derivatives, dopaminergic diterpenoids that can bind to dopamine receptors in the human pituitary gland, have probably ability to lower prolactin levels, and are used to treat menstrual cycle disorders (e.g. premenstrual syndrome and mastodynia). Terpene synthase the catalyzes the conversion of peregrinol diphosphate to labda-13(16),14-dien-9-ol, and of syn-copalyl diphosophate to dehydroabietadiene and syn-isopimara-7,15-diene. The polypeptide is Class I diterpene synthase TPS6, chloroplastic (Vitex agnus-castus (Chaste tree)).